The chain runs to 488 residues: Probable glycine dehydrogenase (decarboxylating) subunit 2 (488 aa).

An N6-(pyridoxal phosphate)lysine modification is found at lysine 274.

It belongs to the GcvP family. C-terminal subunit subfamily. In terms of assembly, the glycine cleavage system is composed of four proteins: P, T, L and H. In this organism, the P 'protein' is a heterodimer of two subunits. The cofactor is pyridoxal 5'-phosphate.

It catalyses the reaction N(6)-[(R)-lipoyl]-L-lysyl-[glycine-cleavage complex H protein] + glycine + H(+) = N(6)-[(R)-S(8)-aminomethyldihydrolipoyl]-L-lysyl-[glycine-cleavage complex H protein] + CO2. Its function is as follows. The glycine cleavage system catalyzes the degradation of glycine. The P protein binds the alpha-amino group of glycine through its pyridoxal phosphate cofactor; CO(2) is released and the remaining methylamine moiety is then transferred to the lipoamide cofactor of the H protein. This chain is Probable glycine dehydrogenase (decarboxylating) subunit 2, found in Listeria monocytogenes serotype 4a (strain HCC23).